A 395-amino-acid chain; its full sequence is GPI-anchor transamidase (395 aa).

An N-terminal signal peptide occupies residues 1-27 (MAVTDSLSRAATVLATVLLLSFGSVAA). Over 28 to 368 (SHIEDQAEQF…PKLKDWHPPG (341 aa)) the chain is Lumenal. Ca(2+) contacts are provided by Asp-79, Ile-82, Glu-118, and Asp-120. His-164 functions as the Proton donor in the catalytic mechanism. The active-site Nucleophile; acyl-thioester intermediate is Cys-206. A protein contacts are provided by Cys-206, Ser-232, and Ser-234. Positions 231–236 (DSLSHQ) are autoinhibitory loop. Cysteines 275 and 280 form a disulfide. The chain crosses the membrane as a helical span at residues 369–385 (GFILGLWALIIMVFFKT). The Cytoplasmic segment spans residues 386–395 (YGIKHMKFIF).

The protein belongs to the peptidase C13 family. Heteropentamer. Part of the GPI-anchor transamidase complex, consisting of PIGK, PIGT, PIGS, PIGU and GAA1. Interacts with GPAA1. Interacts with PIGT; this interaction, via a disulfide link, stabilizes the expression of GAA1 and PIGK and links them to PIGS. Post-translationally, the disulfide bond between PIGK/GPI8 and PIGT is important for normal enzyme activity.

The protein resides in the endoplasmic reticulum membrane. It functions in the pathway glycolipid biosynthesis; glycosylphosphatidylinositol-anchor biosynthesis. With respect to regulation, in the absence of proproteins substrates, exists in an inactive state with a disrupted catalytic site by an autoinhibitory loop. The binding of proprotein substrates, particularly the CSP region, to GPI-T triggers concerted conformational changes that alleviate the inhibition by the autoinhibitory loop. Meanwhile, proprotein residues near the omega- site induce the formation of a catalytic cleft for catalysis, following which the products are released and GPI-T reverts to the inactive state. In terms of biological role, catalytic subunit of the glycosylphosphatidylinositol-anchor (GPI-anchor) transamidase (GPI-T) complex that catalyzes the formation of the linkage between a proprotein and a GPI-anchor and participates in GPI anchored protein biosynthesis. Recognizes diverse proproteins at a C-terminal signal peptide (CSP) region that lacks consensus sequence and replaces it with a GPI-anchor via a transamidation reaction. Transamidation catalysis reaction follows a two-phase mechanism. In the acyl-enzyme phase, the carbonyl group of the proproteins's omega-site undergoes a nucleophilic attack forming an enzyme-substrate thioester bond. Followed by a general acid catalysis that allows CSP releasing, regenerating the carbonyl, and forming the acyl-enzyme intermediate. In the GPI-anchor attachment phase, the amino group of the GPI-anchor's ethanolamine phosphate, the one on third mannose (EtNP3), mediates a nucleophilic attack on the carbonyl of the acyl-enzyme intermediate, replacing the CSP, allowing GPI-anchor attachment to the omega-residue, therefore forming the product and freeing the enzyme. The sequence is that of GPI-anchor transamidase from Homo sapiens (Human).